The primary structure comprises 323 residues: Methenyltetrahydromethanopterin cyclohydrolase (323 aa).

The protein belongs to the MCH family.

The protein localises to the cytoplasm. It catalyses the reaction 5,10-methenyl-5,6,7,8-tetrahydromethanopterin + H2O = N(5)-formyl-5,6,7,8-tetrahydromethanopterin + H(+). Its pathway is one-carbon metabolism; methanogenesis from CO(2); 5,10-methenyl-5,6,7,8-tetrahydromethanopterin from CO(2): step 3/3. Functionally, catalyzes the reversible interconversion of 5-formyl-H(4)MPT to methenyl-H(4)MPT(+). This is Methenyltetrahydromethanopterin cyclohydrolase from Methanococcus vannielii (strain ATCC 35089 / DSM 1224 / JCM 13029 / OCM 148 / SB).